Consider the following 224-residue polypeptide: Redox-sensing transcriptional repressor Rex (224 aa).

Residues 17 to 56 constitute a DNA-binding region (H-T-H motif); sequence RYHRYLEELLKNDVKRISSRELSEKMGVTASQIRQDLNNF. 91–96 contacts NAD(+); it reads GAGNLG.

This sequence belongs to the transcriptional regulatory Rex family. As to quaternary structure, homodimer.

Its subcellular location is the cytoplasm. In terms of biological role, modulates transcription in response to changes in cellular NADH/NAD(+) redox state. This chain is Redox-sensing transcriptional repressor Rex, found in Thermoanaerobacter sp. (strain X514).